We begin with the raw amino-acid sequence, 106 residues long: Large ribosomal subunit protein P2 (106 aa).

The disordered stretch occupies residues 79–106 (GAGAVAEAKKEEPEEEEADDDMGFGLFD). A compositionally biased stretch (acidic residues) spans 91–100 (PEEEEADDDM).

It belongs to the eukaryotic ribosomal protein P1/P2 family. In terms of assembly, P1 and P2 exist as dimers at the large ribosomal subunit. In terms of processing, phosphorylated.

Plays an important role in the elongation step of protein synthesis. The protein is Large ribosomal subunit protein P2 (LIP) of Leishmania infantum.